The chain runs to 363 residues: Phosphoserine aminotransferase (363 aa).

Arg-42 contacts L-glutamate. Residues 76–77 (AS), Trp-101, Thr-151, Asp-170, and Gln-193 contribute to the pyridoxal 5'-phosphate site. Residue Lys-194 is modified to N6-(pyridoxal phosphate)lysine. 234–235 (NT) lines the pyridoxal 5'-phosphate pocket.

Belongs to the class-V pyridoxal-phosphate-dependent aminotransferase family. SerC subfamily. In terms of assembly, homodimer. Requires pyridoxal 5'-phosphate as cofactor.

It is found in the cytoplasm. It catalyses the reaction O-phospho-L-serine + 2-oxoglutarate = 3-phosphooxypyruvate + L-glutamate. It carries out the reaction 4-(phosphooxy)-L-threonine + 2-oxoglutarate = (R)-3-hydroxy-2-oxo-4-phosphooxybutanoate + L-glutamate. The protein operates within amino-acid biosynthesis; L-serine biosynthesis; L-serine from 3-phospho-D-glycerate: step 2/3. Catalyzes the reversible conversion of 3-phosphohydroxypyruvate to phosphoserine and of 3-hydroxy-2-oxo-4-phosphonooxybutanoate to phosphohydroxythreonine. The sequence is that of Phosphoserine aminotransferase from Listeria monocytogenes serotype 4b (strain F2365).